A 252-amino-acid polypeptide reads, in one-letter code: Agamous-like MADS-box protein AGL6 (252 aa).

The 55-residue stretch at 3-57 folds into the MADS-box domain; sequence RGRVEMKRIENKINRQVTFSKRRNGLLKKAYELSVLCDAEVALIIFSSRGKLYEF. The 91-residue stretch at 86-176 folds into the K-box domain; the sequence is TQSWCQEVTK…KIKFETEGHA (91 aa). The stretch at 91 to 173 forms a coiled coil; the sequence is QEVTKLKSKY…KQLKIKFETE (83 aa).

In terms of assembly, forms a heterodimer with AGAMOUS. Interacts with AGL15 and AGL16. As to expression, preferentially expressed in flowers.

It localises to the nucleus. Probable transcription factor. Forms a heterodimer via the K-box domain with AG, that could be involved in genes regulation during floral meristem development. The sequence is that of Agamous-like MADS-box protein AGL6 (AGL6) from Arabidopsis thaliana (Mouse-ear cress).